Consider the following 290-residue polypeptide: Sodium/potassium-transporting ATPase subunit beta-2 (290 aa).

Residues 1 to 39 (MVIQKEKKSCGQVVEEWKEFVWNPRTHQFMGRTGTSWAF) are Cytoplasmic-facing. The helical; Signal-anchor for type II membrane protein transmembrane segment at 40 to 67 (ILLFYLVFYGFLTAMFTLTMWVMLQTVS) threads the bilayer. Topologically, residues 68 to 290 (DHTPKYQDRL…VAFKLRINKT (223 aa)) are extracellular. 2 N-linked (GlcNAc...) asparagine glycosylation sites follow: Asn-96 and Asn-118. Residues Cys-129 and Cys-150 are joined by a disulfide bond. Asn-153 is a glycosylation site (N-linked (GlcNAc...) asparagine). The cysteines at positions 160 and 177 are disulfide-linked. Residues Asn-193, Asn-197, and Asn-238 are each glycosylated (N-linked (GlcNAc...) asparagine). The interval 193–289 (NQSMNVTCVG…RVAFKLRINK (97 aa)) is immunoglobulin-like. A disulfide bond links Cys-200 and Cys-261.

Belongs to the X(+)/potassium ATPases subunit beta family. As to quaternary structure, the sodium/potassium-transporting ATPase is composed of a catalytic alpha subunit, an auxiliary non-catalytic beta subunit and an additional regulatory subunit. Interacts with BSG.

The protein localises to the cell membrane. This is the non-catalytic component of the active enzyme, which catalyzes the hydrolysis of ATP coupled with the exchange of Na(+) and K(+) ions across the plasma membrane. The exact function of the beta-2 subunit is not known. Its function is as follows. Mediates cell adhesion of neurons and astrocytes, and promotes neurite outgrowth. The polypeptide is Sodium/potassium-transporting ATPase subunit beta-2 (ATP1B2) (Bos taurus (Bovine)).